Consider the following 188-residue polypeptide: Ribosome-recycling factor (188 aa).

Belongs to the RRF family.

It is found in the cytoplasm. Responsible for the release of ribosomes from messenger RNA at the termination of protein biosynthesis. May increase the efficiency of translation by recycling ribosomes from one round of translation to another. The protein is Ribosome-recycling factor of Blochmanniella pennsylvanica (strain BPEN).